Reading from the N-terminus, the 119-residue chain is Large ribosomal subunit protein uL18 (119 aa).

This sequence belongs to the universal ribosomal protein uL18 family. In terms of assembly, part of the 50S ribosomal subunit; part of the 5S rRNA/L5/L18/L25 subcomplex. Contacts the 5S and 23S rRNAs.

Its function is as follows. This is one of the proteins that bind and probably mediate the attachment of the 5S RNA into the large ribosomal subunit, where it forms part of the central protuberance. This chain is Large ribosomal subunit protein uL18, found in Desulfovibrio desulfuricans (strain ATCC 27774 / DSM 6949 / MB).